Here is a 280-residue protein sequence, read N- to C-terminus: Ribosomal RNA small subunit methyltransferase A (280 aa).

6 residues coordinate S-adenosyl-L-methionine: N30, V32, G57, E78, D108, and N125.

This sequence belongs to the class I-like SAM-binding methyltransferase superfamily. rRNA adenine N(6)-methyltransferase family. RsmA subfamily.

The protein resides in the cytoplasm. The catalysed reaction is adenosine(1518)/adenosine(1519) in 16S rRNA + 4 S-adenosyl-L-methionine = N(6)-dimethyladenosine(1518)/N(6)-dimethyladenosine(1519) in 16S rRNA + 4 S-adenosyl-L-homocysteine + 4 H(+). Its function is as follows. Specifically dimethylates two adjacent adenosines (A1518 and A1519) in the loop of a conserved hairpin near the 3'-end of 16S rRNA in the 30S particle. May play a critical role in biogenesis of 30S subunits. This Leifsonia xyli subsp. xyli (strain CTCB07) protein is Ribosomal RNA small subunit methyltransferase A.